Reading from the N-terminus, the 629-residue chain is MHFHERFDVIVVGGGHAGTEAALASARMGSKTLLLTHNIDTLGQMSCNPAIGGIGKGHLVKEIDALGGAMAIATDFAGIQFRTLNSSKGPAVRATRAQADRALYRQKIQQILQSQPNLRIFQQAVDDLVVENNQVVGVVTQMGLAFESPTVVLTTGTFLSGKIHIGMQNYSGGRAGDPPAIALANRLRELPIRVGRLKTGTPPRIDANSIDFSQMTEQKGDTPLPVMSFVGNVDQHPRQISCHITHTNEKTHDIIRGGLDRSPMYSGVIEGIGPRYCPSIEDKIHRFADKTSHQIFIEPEGLSTNEIYPNGISTSLPFDVQLNLVRSIKGMENAEIIRPGYAIEYDYFDPRDLKNSLETKTINGLFFAGQINGTTGYEEAGAQGLLAGMNASLQVQGKETWCPRRDQAYLGVLVDDLSTLGTKEPYRMFTSRAEYRLLLREDNADLRLTEKGRELGLVNDDRWAKFTEKRESIELELQRLRGQWIHPNSPLLGVLNPELNTPISREASFEDLLRRPEMDYQKLMSLEGFGPGLEDPSAAEQVQIQVKYSGYIQRQQDEIDKAIRHENSLLPLDLDYQEVPGLSNEVIAKLNNHKPDTIGQASRISGITPAAISILLVHLKKRGLLRKTA.

13 to 18 (GGGHAG) lines the FAD pocket. 273-287 (GPRYCPSIEDKIHRF) is a binding site for NAD(+).

It belongs to the MnmG family. In terms of assembly, homodimer. Heterotetramer of two MnmE and two MnmG subunits. Requires FAD as cofactor.

The protein localises to the cytoplasm. In terms of biological role, NAD-binding protein involved in the addition of a carboxymethylaminomethyl (cmnm) group at the wobble position (U34) of certain tRNAs, forming tRNA-cmnm(5)s(2)U34. In Shewanella denitrificans (strain OS217 / ATCC BAA-1090 / DSM 15013), this protein is tRNA uridine 5-carboxymethylaminomethyl modification enzyme MnmG.